We begin with the raw amino-acid sequence, 484 residues long: Protein nucleotidyltransferase YdiU (484 aa).

ATP is bound by residues Gly81, Gly83, Arg84, Lys103, Asp115, Gly116, Arg166, and Arg173. The Proton acceptor role is filled by Asp244. Residues Asn245 and Asp254 each contribute to the Mg(2+) site. Residue Asp254 coordinates ATP.

The protein belongs to the SELO family. Mg(2+) is required as a cofactor. It depends on Mn(2+) as a cofactor.

It carries out the reaction L-seryl-[protein] + ATP = 3-O-(5'-adenylyl)-L-seryl-[protein] + diphosphate. The enzyme catalyses L-threonyl-[protein] + ATP = 3-O-(5'-adenylyl)-L-threonyl-[protein] + diphosphate. It catalyses the reaction L-tyrosyl-[protein] + ATP = O-(5'-adenylyl)-L-tyrosyl-[protein] + diphosphate. The catalysed reaction is L-histidyl-[protein] + UTP = N(tele)-(5'-uridylyl)-L-histidyl-[protein] + diphosphate. It carries out the reaction L-seryl-[protein] + UTP = O-(5'-uridylyl)-L-seryl-[protein] + diphosphate. The enzyme catalyses L-tyrosyl-[protein] + UTP = O-(5'-uridylyl)-L-tyrosyl-[protein] + diphosphate. Its function is as follows. Nucleotidyltransferase involved in the post-translational modification of proteins. It can catalyze the addition of adenosine monophosphate (AMP) or uridine monophosphate (UMP) to a protein, resulting in modifications known as AMPylation and UMPylation. This is Protein nucleotidyltransferase YdiU from Shewanella baltica (strain OS185).